We begin with the raw amino-acid sequence, 355 residues long: S-methyl-5'-thioadenosine phosphorylase (355 aa).

Residues T45, 91 to 92 (RH), and 124 to 125 (SA) contribute to the phosphate site. M226 is a binding site for substrate. Position 227 (S227) interacts with phosphate. A substrate-binding site is contributed by 250 to 252 (DYD).

This sequence belongs to the PNP/MTAP phosphorylase family. MTAP subfamily. As to quaternary structure, homotrimer.

It is found in the cytoplasm. The protein resides in the nucleus. The enzyme catalyses S-methyl-5'-thioadenosine + phosphate = 5-(methylsulfanyl)-alpha-D-ribose 1-phosphate + adenine. The protein operates within amino-acid biosynthesis; L-methionine biosynthesis via salvage pathway; S-methyl-5-thio-alpha-D-ribose 1-phosphate from S-methyl-5'-thioadenosine (phosphorylase route): step 1/1. Functionally, catalyzes the reversible phosphorylation of S-methyl-5'-thioadenosine (MTA) to adenine and 5-methylthioribose-1-phosphate. Involved in the breakdown of MTA, a major by-product of polyamine biosynthesis. Responsible for the first step in the methionine salvage pathway after MTA has been generated from S-adenosylmethionine. Has broad substrate specificity with 6-aminopurine nucleosides as preferred substrates. The sequence is that of S-methyl-5'-thioadenosine phosphorylase from Emericella nidulans (strain FGSC A4 / ATCC 38163 / CBS 112.46 / NRRL 194 / M139) (Aspergillus nidulans).